The following is a 751-amino-acid chain: Photosystem I P700 chlorophyll a apoprotein A1 (751 aa).

The next 8 membrane-spanning stretches (helical) occupy residues 71 to 94 (VFSA…FHGA), 157 to 180 (LYCT…FHYH), 196 to 220 (LNHH…HVSL), 292 to 310 (TAHH…GHMY), 347 to 370 (WHAQ…HHMY), 386 to 412 (LSLF…IFLV), 434 to 456 (AIIS…LYIH), and 532 to 550 (FLVH…LILL). Cys-574 and Cys-583 together coordinate [4Fe-4S] cluster. The next 2 membrane-spanning stretches (helical) occupy residues 590 to 611 (HVFL…HFSW) and 665 to 687 (LSAY…MFLF). Position 676 (His-676) interacts with chlorophyll a'. Positions 684 and 692 each coordinate chlorophyll a. Trp-693 is a binding site for phylloquinone. A helical transmembrane segment spans residues 725 to 745 (AVGVAHYLLGGIVTTWAFFLA).

It belongs to the PsaA/PsaB family. In terms of assembly, the PsaA/B heterodimer binds the P700 chlorophyll special pair and subsequent electron acceptors. PSI consists of a core antenna complex that captures photons, and an electron transfer chain that converts photonic excitation into a charge separation. The eukaryotic PSI reaction center is composed of at least 11 subunits. It depends on P700 is a chlorophyll a/chlorophyll a' dimer, A0 is one or more chlorophyll a, A1 is one or both phylloquinones and FX is a shared 4Fe-4S iron-sulfur center. as a cofactor.

It is found in the plastid. The protein localises to the chloroplast thylakoid membrane. The enzyme catalyses reduced [plastocyanin] + hnu + oxidized [2Fe-2S]-[ferredoxin] = oxidized [plastocyanin] + reduced [2Fe-2S]-[ferredoxin]. In terms of biological role, psaA and PsaB bind P700, the primary electron donor of photosystem I (PSI), as well as the electron acceptors A0, A1 and FX. PSI is a plastocyanin-ferredoxin oxidoreductase, converting photonic excitation into a charge separation, which transfers an electron from the donor P700 chlorophyll pair to the spectroscopically characterized acceptors A0, A1, FX, FA and FB in turn. Oxidized P700 is reduced on the lumenal side of the thylakoid membrane by plastocyanin. This is Photosystem I P700 chlorophyll a apoprotein A1 from Welwitschia mirabilis (Tree tumbo).